The sequence spans 367 residues: uncharacterized protein (367 aa).

Its subcellular location is the mitochondrion. This is an uncharacterized protein from Paramecium tetraurelia.